Reading from the N-terminus, the 477-residue chain is Zinc finger C3HC-type protein 1-like (477 aa).

The C3HC-type zinc finger occupies Cys95–Cys149. Residues Ser287–Ser392 are disordered. The segment covering Ser354–Leu363 has biased composition (polar residues). Residues Ser370–Arg379 show a composition bias toward basic residues. Positions Ser382–Ser392 are enriched in low complexity.

In terms of processing, phosphorylated. May also be weakly phosphorylated on Tyr residues.

Its subcellular location is the nucleus. It localises to the nucleus envelope. In terms of biological role, required for proper positioning of a substantial amount of TPR at the nuclear basket (NB) through interaction with TPR. The polypeptide is Zinc finger C3HC-type protein 1-like (zc3hc1) (Xenopus laevis (African clawed frog)).